We begin with the raw amino-acid sequence, 283 residues long: Thymidylate synthase (283 aa).

Position 22 (arginine 22) interacts with dUMP. Cysteine 160 serves as the catalytic Nucleophile. DUMP-binding positions include 180 to 183, asparagine 191, and 221 to 223; these read RSCD and HIY. Aspartate 183 contributes to the (6R)-5,10-methylene-5,6,7,8-tetrahydrofolate binding site. (6R)-5,10-methylene-5,6,7,8-tetrahydrofolate is bound at residue serine 282.

Belongs to the thymidylate synthase family. Bacterial-type ThyA subfamily. In terms of assembly, homodimer.

The protein localises to the cytoplasm. The enzyme catalyses dUMP + (6R)-5,10-methylene-5,6,7,8-tetrahydrofolate = 7,8-dihydrofolate + dTMP. The protein operates within pyrimidine metabolism; dTTP biosynthesis. Its function is as follows. Catalyzes the reductive methylation of 2'-deoxyuridine-5'-monophosphate (dUMP) to 2'-deoxythymidine-5'-monophosphate (dTMP) while utilizing 5,10-methylenetetrahydrofolate (mTHF) as the methyl donor and reductant in the reaction, yielding dihydrofolate (DHF) as a by-product. This enzymatic reaction provides an intracellular de novo source of dTMP, an essential precursor for DNA biosynthesis. In Tolumonas auensis (strain DSM 9187 / NBRC 110442 / TA 4), this protein is Thymidylate synthase.